We begin with the raw amino-acid sequence, 187 residues long: Large ribosomal subunit protein uL6 (187 aa).

Belongs to the universal ribosomal protein uL6 family. Part of the 50S ribosomal subunit.

Its function is as follows. This protein binds to the 23S rRNA, and is important in its secondary structure. It is located near the subunit interface in the base of the L7/L12 stalk, and near the tRNA binding site of the peptidyltransferase center. This is Large ribosomal subunit protein uL6 from Thermosynechococcus vestitus (strain NIES-2133 / IAM M-273 / BP-1).